The sequence spans 264 residues: Apolipoprotein A-I (264 aa).

The signal sequence occupies residues 1–18 (MKAVVLTVAVLFLTGSQA). 2 repeat units span residues 67–88 (LKLL…EQLG) and 89–110 (PVTQ…QEMN). The 10 X approximate tandem repeats stretch occupies residues 67 to 264 (LKLLDNWDTL…DDAAKKLSSQ (198 aa)). Met-109 carries the post-translational modification Methionine sulfoxide. A 3; half-length repeat occupies 111–121 (KDLEEVKQKVQ). 3 tandem repeats follow at residues 122 to 143 (PYLE…QKVE), 144 to 165 (PLST…EKLT), and 166 to 187 (PLGE…TQLA). Residues 188–207 (PYSDKMRERLAERLTALKDS) form a 7; truncated repeat. The residue at position 193 (Met-193) is a Methionine sulfoxide. Copy 8 of the repeat occupies 208 to 229 (ASFAEYHAKASEHLKTLREKAK). One copy of the 9; half-length repeat lies at 230 to 240 (PAIEDLGQGLL). Repeat 10 spans residues 241–264 (PVLENLKASFLSAIDDAAKKLSSQ).

Belongs to the apolipoprotein A1/A4/E family. As to quaternary structure, homodimer. Interacts with APOA1BP and CLU. Component of a sperm activating protein complex (SPAP), consisting of APOA1, an immunoglobulin heavy chain, an immunoglobulin light chain and albumin. Interacts with NDRG1. Interacts with SCGB3A2. Interacts with NAXE and YJEFN3. Glycosylated. In terms of processing, palmitoylated. Post-translationally, phosphorylation sites are present in the extracellular medium.

The protein localises to the secreted. In terms of biological role, participates in the reverse transport of cholesterol from tissues to the liver for excretion by promoting cholesterol efflux from tissues and by acting as a cofactor for the lecithin cholesterol acyltransferase (LCAT). As part of the SPAP complex, activates spermatozoa motility. In Castor canadensis (American beaver), this protein is Apolipoprotein A-I (APOA1).